The chain runs to 218 residues: tRNA (guanosine(18)-2'-O)-methyltransferase (218 aa).

S-adenosyl-L-methionine is bound by residues threonine 111 and isoleucine 154.

The protein belongs to the class IV-like SAM-binding methyltransferase superfamily. RNA methyltransferase TrmH family.

The enzyme catalyses guanosine(18) in tRNA + S-adenosyl-L-methionine = 2'-O-methylguanosine(18) in tRNA + S-adenosyl-L-homocysteine + H(+). Its function is as follows. Catalyzes the 2'-O methylation of guanosine at position 18 in tRNA. This chain is tRNA (guanosine(18)-2'-O)-methyltransferase, found in Borreliella burgdorferi (strain ATCC 35210 / DSM 4680 / CIP 102532 / B31) (Borrelia burgdorferi).